Here is an 89-residue protein sequence, read N- to C-terminus: Small ribosomal subunit protein uS15 (89 aa).

Belongs to the universal ribosomal protein uS15 family. As to quaternary structure, part of the 30S ribosomal subunit. Forms a bridge to the 50S subunit in the 70S ribosome, contacting the 23S rRNA.

One of the primary rRNA binding proteins, it binds directly to 16S rRNA where it helps nucleate assembly of the platform of the 30S subunit by binding and bridging several RNA helices of the 16S rRNA. Its function is as follows. Forms an intersubunit bridge (bridge B4) with the 23S rRNA of the 50S subunit in the ribosome. This Ruegeria sp. (strain TM1040) (Silicibacter sp.) protein is Small ribosomal subunit protein uS15.